A 251-amino-acid chain; its full sequence is Large ribosomal subunit protein uL16m (251 aa).

The transit peptide at 1–29 directs the protein to the mitochondrion; sequence MWRLLARASAPLLRVPLSDSWALLPASAG.

Belongs to the universal ribosomal protein uL16 family. As to quaternary structure, component of the mitochondrial large ribosomal subunit (mt-LSU). Mature mammalian 55S mitochondrial ribosomes consist of a small (28S) and a large (39S) subunit. The 28S small subunit contains a 12S ribosomal RNA (12S mt-rRNA) and 30 different proteins. The 39S large subunit contains a 16S rRNA (16S mt-rRNA), a copy of mitochondrial valine transfer RNA (mt-tRNA(Val)), which plays an integral structural role, and 52 different proteins.

The protein resides in the mitochondrion. This Homo sapiens (Human) protein is Large ribosomal subunit protein uL16m (MRPL16).